A 499-amino-acid chain; its full sequence is BTB/POZ domain-containing protein At5g60050 (499 aa).

The segment covering 18–30 has biased composition (low complexity); sequence PSLSFSPSRISSP. Positions 18-57 are disordered; sequence PSLSFSPSRISSPIKLSTASPPLPPPPPPPPNESTLSNPT. Residues 38–49 show a composition bias toward pro residues; sequence PPLPPPPPPPPN. Residues 99–172 enclose the BTB domain; it reads GDVKLTVVGK…MYSDDLKKKL (74 aa).

The protein operates within protein modification; protein ubiquitination. May act as a substrate-specific adapter of an E3 ubiquitin-protein ligase complex (CUL3-RBX1-BTB) which mediates the ubiquitination and subsequent proteasomal degradation of target proteins. The sequence is that of BTB/POZ domain-containing protein At5g60050 from Arabidopsis thaliana (Mouse-ear cress).